A 316-amino-acid polypeptide reads, in one-letter code: tRNA dimethylallyltransferase (316 aa).

15–22 (GPTASGKS) provides a ligand contact to ATP. Residue 17-22 (TASGKS) coordinates substrate. The segment at 40-43 (DSRQ) is interaction with substrate tRNA.

It belongs to the IPP transferase family. As to quaternary structure, monomer. Mg(2+) serves as cofactor.

The catalysed reaction is adenosine(37) in tRNA + dimethylallyl diphosphate = N(6)-dimethylallyladenosine(37) in tRNA + diphosphate. Functionally, catalyzes the transfer of a dimethylallyl group onto the adenine at position 37 in tRNAs that read codons beginning with uridine, leading to the formation of N6-(dimethylallyl)adenosine (i(6)A). This Chlorobium limicola (strain DSM 245 / NBRC 103803 / 6330) protein is tRNA dimethylallyltransferase.